The sequence spans 72 residues: UPF0346 protein GK1571 (72 aa).

It belongs to the UPF0346 family.

The protein is UPF0346 protein GK1571 of Geobacillus kaustophilus (strain HTA426).